Consider the following 361-residue polypeptide: MSKRAFNFCAGPAALPTAVLQRAQAEMLDWQGKGLSVMEMSHRSDEYVAIASQAEQDLRDLLAVPNDYKVLFLQGGASQQFAEIPLNLLPEDGVADYVETGIWSKKAIEEARRYGAINVAASAKSYDYFAIPGQNDWQLSKNAAYVHYCSNETIGGLQFDWVPQTGDIPLVVDMSSDILSRPIDVSQFGLIYAGAQKNIGPSGLVVVIVREDLLGRARSSCPTMLDYKISADNGSMYNTPATYSWYLSGLVFQWLKEQGGVEAMERINRAKKDLLYKAIDGSDFYSNPIAHNARSWMNVPFRLADEKLDKAFLAGADERGLLNLKGHRSVGGMRASIYNAVGLDAVEALVAYMAEFEKEHA.

R43 is a binding site for L-glutamate. Pyridoxal 5'-phosphate-binding positions include 77 to 78, W103, T153, D173, and Q196; that span reads AS. K197 is subject to N6-(pyridoxal phosphate)lysine. Residue 238-239 participates in pyridoxal 5'-phosphate binding; the sequence is NT.

The protein belongs to the class-V pyridoxal-phosphate-dependent aminotransferase family. SerC subfamily. As to quaternary structure, homodimer. Pyridoxal 5'-phosphate is required as a cofactor.

The protein localises to the cytoplasm. The catalysed reaction is O-phospho-L-serine + 2-oxoglutarate = 3-phosphooxypyruvate + L-glutamate. The enzyme catalyses 4-(phosphooxy)-L-threonine + 2-oxoglutarate = (R)-3-hydroxy-2-oxo-4-phosphooxybutanoate + L-glutamate. Its pathway is amino-acid biosynthesis; L-serine biosynthesis; L-serine from 3-phospho-D-glycerate: step 2/3. It participates in cofactor biosynthesis; pyridoxine 5'-phosphate biosynthesis; pyridoxine 5'-phosphate from D-erythrose 4-phosphate: step 3/5. Functionally, catalyzes the reversible conversion of 3-phosphohydroxypyruvate to phosphoserine and of 3-hydroxy-2-oxo-4-phosphonooxybutanoate to phosphohydroxythreonine. The polypeptide is Phosphoserine aminotransferase (Ectopseudomonas mendocina (strain ymp) (Pseudomonas mendocina)).